Reading from the N-terminus, the 450-residue chain is Glutathione reductase (450 aa).

FAD is bound by residues serine 14, glycine 15, glutamate 34, threonine 41, cysteine 42, and lysine 50. Serine 14 contributes to the glutathione binding site. The cysteines at positions 42 and 47 are disulfide-linked. Tyrosine 99 is a glutathione binding site. Alanine 115 contributes to the FAD binding site. NADP(+)-binding residues include alanine 175, isoleucine 178, glutamate 181, arginine 198, arginine 204, and glycine 262. Residue aspartate 303 participates in FAD binding. Glutamate 309 serves as a coordination point for NADP(+). Threonine 311 is a binding site for FAD. Arginine 319 contacts glutathione. Residue valine 342 coordinates NADP(+). An FAD-binding site is contributed by histidine 439. The active-site Proton acceptor is histidine 439.

The protein belongs to the class-I pyridine nucleotide-disulfide oxidoreductase family. As to quaternary structure, homodimer. The cofactor is FAD.

Its subcellular location is the cytoplasm. It catalyses the reaction 2 glutathione + NADP(+) = glutathione disulfide + NADPH + H(+). In terms of biological role, catalyzes the reduction of glutathione disulfide (GSSG) to reduced glutathione (GSH). Constitutes the major mechanism to maintain a high GSH:GSSG ratio in the cytosol. In Escherichia coli (strain K12), this protein is Glutathione reductase (gor).